The following is a 191-amino-acid chain: MAQLFFRYGSMNSGKTIEILKVAHNYEEQNKTVAIFTSGIDDRDQVGFISSRIGLKREATPIFSDTNIFEIVVNIKPKPNCVLLDESQFLEKEHVFQLAKIVDELNIPVIAYGLKNDFRNELFEGSKYLLLYADKLEEMKTICWFCAKKATMVLRVDDKGKPVYTGEQIMIGGNDHYYPVCRKCHANPPIK.

ATP is bound by residues Gly9 to Thr16 and Asp85 to Gln88. The Proton acceptor role is filled by Glu86. 4 residues coordinate Zn(2+): Cys143, Cys146, Cys181, and Cys184.

Belongs to the thymidine kinase family. Homotetramer.

It localises to the cytoplasm. It carries out the reaction thymidine + ATP = dTMP + ADP + H(+). This Listeria monocytogenes serovar 1/2a (strain ATCC BAA-679 / EGD-e) protein is Thymidine kinase.